We begin with the raw amino-acid sequence, 96 residues long: Co-chaperonin GroES 2 (96 aa).

The protein belongs to the GroES chaperonin family. As to quaternary structure, heptamer of 7 subunits arranged in a ring. Interacts with the chaperonin GroEL.

It localises to the cytoplasm. Its function is as follows. Together with the chaperonin GroEL, plays an essential role in assisting protein folding. The GroEL-GroES system forms a nano-cage that allows encapsulation of the non-native substrate proteins and provides a physical environment optimized to promote and accelerate protein folding. GroES binds to the apical surface of the GroEL ring, thereby capping the opening of the GroEL channel. This is Co-chaperonin GroES 2 from Vibrio parahaemolyticus serotype O3:K6 (strain RIMD 2210633).